The following is a 151-amino-acid chain: Cyanate hydratase (151 aa).

Active-site residues include R92, E95, and S118.

This sequence belongs to the cyanase family.

It catalyses the reaction cyanate + hydrogencarbonate + 3 H(+) = NH4(+) + 2 CO2. In terms of biological role, catalyzes the reaction of cyanate with bicarbonate to produce ammonia and carbon dioxide. This is Cyanate hydratase from Coprinopsis cinerea (strain Okayama-7 / 130 / ATCC MYA-4618 / FGSC 9003) (Inky cap fungus).